The following is a 2641-amino-acid chain: CCR4-NOT transcription complex subunit let-711 (2641 aa).

An LXXLL motif is present at residues 660–664 (LSELL). Disordered regions lie at residues 771-887 (SGRS…QNAQ), 936-963 (TQRQ…PQQQ), 1197-1221 (EGGR…PAAA), 1518-1565 (QSKI…SQGA), and 2034-2054 (GMNN…AGLQ). Composition is skewed to low complexity over residues 774-795 (SSSV…QQQQ), 802-839 (LPPS…SQQQ), and 853-877 (PAQF…HMMG). Positions 951–960 (PQRPSGPPTP) are enriched in pro residues. Over residues 1205 to 1221 (GSAQAGSASSTPTPAAA) the composition is skewed to low complexity. Low complexity predominate over residues 2034–2046 (GMNNAMNNGAGNA). Residues 2341-2345 (LRVLL) carry the LXXLL motif. Residues 2609-2641 (AQGSQPQAQPDGAPGPLGNNTGAANQQQNPNTN) form a disordered region.

Belongs to the CNOT1 family. Component of the CCR4-NOT complex at least composed of ccf-1, ccr-4 and let-711, which is required for germ cell development in hermaphrodites. Within the complex interacts with ccf-1 and ccr-4; the interactions are direct. As to expression, highly expressed in the germline of hermaphrodites.

The protein resides in the nucleus. Its function is as follows. Scaffolding component of the CCR4-NOT complex which is one of the major cellular mRNA deadenylases and is linked to various cellular processes including bulk mRNA degradation, miRNA-mediated repression, translational repression during translational initiation and general transcription regulation. Positively regulates the accumulation of the CCR4-NOT complex component ccr-1. Within the complex promotes germ cell development and fertility in hermaphrodites. Additional complex functions may be a consequence of its influence on mRNA expression. Its scaffolding function implies its interaction with the catalytic complex module and diverse RNA-binding proteins mediating the complex recruitment to selected mRNA 3'UTRs. Mediates the recruitment of the CCR4-NOT complex to miRNA targets and to the RISC complex. Acts as a transcriptional repressor. Represses the ligand-dependent transcriptional activation by nuclear receptors. In embryos, plays a role in female pronucleus and mitotic spindle positioning during the first cleavage divisions after fertilization. This may partly be through negatively regulating the accumulation of zyg-9 at the centrosome. Negatively regulates the formation of long astral microtubules in developing embryos. Required for the stabilization and degradation of maternal mRNAs such as nos-2 in somatic blastomeres. This is CCR4-NOT transcription complex subunit let-711 from Caenorhabditis elegans.